The sequence spans 1003 residues: Helicase-like transcription factor (1003 aa).

Omega-N-methylarginine is present on Arg-27. A DNA-binding region spans residues 38–287; that stretch reads EFQDIIPPDD…FSVKERPENV (250 aa). A Glycyl lysine isopeptide (Lys-Gly) (interchain with G-Cter in SUMO2) cross-link involves residue Lys-112. The residue at position 195 (Tyr-195) is a Phosphotyrosine; by JAK2. A Glycyl lysine isopeptide (Lys-Gly) (interchain with G-Cter in SUMO2) cross-link involves residue Lys-211. Residue 294-301 participates in ATP binding; sequence DDMGLGKT. A disordered region spans residues 317–373; it reads PLLSKRGKKNHPGKEYKDETIKRRGSNMDKKEDGHSESSTCGEEPSISGTPEKSSCT. Over residues 328–352 the composition is skewed to basic and acidic residues; that stretch reads PGKEYKDETIKRRGSNMDKKEDGHS. Positions 353 to 373 are enriched in polar residues; it reads ESSTCGEEPSISGTPEKSSCT. Phosphoserine is present on residues Ser-394, Ser-395, and Ser-397. The region spanning 433–600 is the Helicase ATP-binding domain; that stretch reads DSKFALTFFA…WSLLSFLKLK (168 aa). Positions 551–554 match the DEGH box motif; that stretch reads DEGH. A Phosphothreonine modification is found at Thr-730. Residues 754-795 form an RING-type zinc finger; it reads CAICLDSLTFPVITHCAHVFCKPCICQVIHSEQPHAKCPLCR. Residues 831-990 form the Helicase C-terminal domain; that stretch reads ALMHALIELR…TKKTDANDMK (160 aa). The interval 919-1003 is interaction with SP1 and SP3; it reads SRVFLMDPAW…INEIRTLIDL (85 aa).

It belongs to the SNF2/RAD54 helicase family. RAD16 subfamily. Interacts with SP1 and SP3 independently of DNA; the interaction with these transcriptional factors may be required for basal transcription of target genes. Interacts with EGR1; the interaction requires prior binding to DNA and represses c-Rel via a DNA looping mechanism. Interacts with GATA4. Interacts with PCNA; the interaction promotes polyubiquitination of PCNA through association with the UBE2B-RAD18 and UBE2V2-UBE2N ubiquitin ligase complexes. Interacts with RAD18, SHPRH, UBE2V2 and UBE2N. Expressed in brain, heart, kidney, liver, lung, pancreas, placenta and skeletal muscle.

It localises to the cytoplasm. The protein resides in the nucleus. Its subcellular location is the nucleolus. It is found in the nucleoplasm. It carries out the reaction S-ubiquitinyl-[E2 ubiquitin-conjugating enzyme]-L-cysteine + [acceptor protein]-L-lysine = [E2 ubiquitin-conjugating enzyme]-L-cysteine + N(6)-ubiquitinyl-[acceptor protein]-L-lysine.. The protein operates within protein modification; protein ubiquitination. Its function is as follows. Has both helicase and E3 ubiquitin ligase activities. Possesses intrinsic ATP-dependent nucleosome-remodeling activity. This activity may be required for transcriptional activation or repression of specific target promoters. These may include the SERPINE1, to which this protein can bind directly. Plays a role in error-free postreplication repair (PRR) of damaged DNA and maintains genomic stability through acting as a ubiquitin ligase for 'Lys-63'-linked polyubiquitination of chromatin-bound PCNA. The polypeptide is Helicase-like transcription factor (Hltf) (Mus musculus (Mouse)).